The chain runs to 37 residues: Large ribosomal subunit protein bL36c (37 aa).

This sequence belongs to the bacterial ribosomal protein bL36 family.

The protein resides in the plastid. It is found in the chloroplast. The chain is Large ribosomal subunit protein bL36c from Cryptomeria japonica (Japanese cedar).